The primary structure comprises 233 residues: H-2 class II histocompatibility antigen, A-R alpha chain (233 aa).

The interval 1–88 (EDDIEADHVG…KRSNFTPAAN (88 aa)) is alpha-1. Residues 1 to 195 (EDDIEADHVG…IPAPMSELTE (195 aa)) are Extracellular-facing. An alpha-2 region spans residues 89–182 (EAPQATVFPK…GLEEPVLKHW (94 aa)). Positions 91-183 (PQATVFPKSP…LEEPVLKHWE (93 aa)) constitute an Ig-like C1-type domain. A disulfide bridge links cysteine 111 with cysteine 167. Asparagine 122 carries an N-linked (GlcNAc...) asparagine glycan. The interval 183 to 195 (EPEIPAPMSELTE) is connecting peptide. Residues 196–221 (TVVCALGLSVGLVGIVVGTIFIIQGL) traverse the membrane as a helical segment. Over 222–233 (RSGGTSRHPGPL) the chain is Cytoplasmic.

The protein belongs to the MHC class II family.

It is found in the membrane. The chain is H-2 class II histocompatibility antigen, A-R alpha chain (H2-Aa) from Mus musculus (Mouse).